The sequence spans 660 residues: Probable Xaa-Pro aminopeptidase PTRG_10574 (660 aa).

Mn(2+)-binding residues include Asp-274, Asp-285, Glu-435, and Glu-476. Residues 641-660 (SAGSGSTPLWKPHNKQDKKN) are disordered.

Belongs to the peptidase M24B family. The cofactor is Mn(2+).

The enzyme catalyses Release of any N-terminal amino acid, including proline, that is linked to proline, even from a dipeptide or tripeptide.. Functionally, catalyzes the removal of a penultimate prolyl residue from the N-termini of peptides. This is Probable Xaa-Pro aminopeptidase PTRG_10574 from Pyrenophora tritici-repentis (strain Pt-1C-BFP) (Wheat tan spot fungus).